The sequence spans 327 residues: Phenylalanine--tRNA ligase alpha subunit (327 aa).

Glu252 is a Mg(2+) binding site.

Belongs to the class-II aminoacyl-tRNA synthetase family. Phe-tRNA synthetase alpha subunit type 1 subfamily. As to quaternary structure, tetramer of two alpha and two beta subunits. It depends on Mg(2+) as a cofactor.

It localises to the cytoplasm. It carries out the reaction tRNA(Phe) + L-phenylalanine + ATP = L-phenylalanyl-tRNA(Phe) + AMP + diphosphate + H(+). The protein is Phenylalanine--tRNA ligase alpha subunit of Salmonella choleraesuis (strain SC-B67).